Reading from the N-terminus, the 116-residue chain is Large ribosomal subunit protein bL17 (116 aa).

Belongs to the bacterial ribosomal protein bL17 family. In terms of assembly, part of the 50S ribosomal subunit. Contacts protein L32.

The polypeptide is Large ribosomal subunit protein bL17 (Helicobacter acinonychis (strain Sheeba)).